The chain runs to 20 residues: Protein C activator (20 aa).

In terms of domain architecture, Peptidase S1 spans 1-20; sequence VVGGDECNINEHRSLALMYA.

It belongs to the peptidase S1 family. Snake venom subfamily. In terms of assembly, monomer. In terms of processing, glycosylated. As to expression, expressed by the venom gland.

Its subcellular location is the secreted. Its activity is regulated as follows. Inhibited by calcium. Functionally, snake venom serine protease that selectively cleaves the heavy chain of protein C (PROC). This activation is thrombomodulin-independent. The protein is Protein C activator of Agkistrodon bilineatus (Cantil).